The sequence spans 142 residues: Hemoglobin subunit zeta (142 aa).

Ser-2 is subject to N-acetylserine. A Globin domain is found at 2-142; it reads SLTKTERTII…VSSVLTEKYR (141 aa). Thr-29 carries the phosphothreonine modification. Ser-53 is modified (phosphoserine). His-59 is a heme b binding site. Phosphoserine occurs at positions 73 and 82. A heme b-binding site is contributed by His-88.

The protein belongs to the globin family. Heterotetramer of two zeta chains and two epsilon chains in early embryonic hemoglobin Gower-1; two zeta chains and two gamma chains in fetal hemoglobin Portland-1. Heterotetramer of two zeta chains and two beta chains in hemoglobin Portland-2, detected in fetuses and neonates with homozygous alpha-thalassemia. Detected in fetal erythrocytes (at protein level).

In terms of biological role, the zeta chain is an alpha-type chain of mammalian embryonic hemoglobin. This Homo sapiens (Human) protein is Hemoglobin subunit zeta (HBZ).